A 298-amino-acid chain; its full sequence is Nucleotide-binding protein Csal_2229 (298 aa).

8-15 (GRSGSGKS) is a binding site for ATP. Residue 59 to 62 (DARN) coordinates GTP.

This sequence belongs to the RapZ-like family.

Its function is as follows. Displays ATPase and GTPase activities. This chain is Nucleotide-binding protein Csal_2229, found in Chromohalobacter salexigens (strain ATCC BAA-138 / DSM 3043 / CIP 106854 / NCIMB 13768 / 1H11).